A 264-amino-acid chain; its full sequence is Proteasome subunit beta type-4 (264 aa).

Residue Met-1 is modified to N-acetylmethionine. Positions 1–45 are excised as a propeptide; sequence MEALLESRSGLWAGGPAPGQFYRIPPTPGSSVDPVSALYGSPITR. Position 102 is a phosphotyrosine (Tyr-102).

Belongs to the peptidase T1B family. As to quaternary structure, the 26S proteasome consists of a 20S proteasome core and two 19S regulatory subunits. The 20S proteasome core is a barrel-shaped complex made of 28 subunits that are arranged in four stacked rings. The two outer rings are each formed by seven alpha subunits, and the two inner rings are formed by seven beta subunits. The proteolytic activity is exerted by three beta-subunits PSMB5, PSMB6 and PSMB7. Forms a ternary complex with SMAD1 and OAZ1 before PSMB4 is incorporated into the 20S proteasome. Interacts with PRPF19.

It is found in the cytoplasm. Its subcellular location is the nucleus. In terms of biological role, non-catalytic component of the 20S core proteasome complex involved in the proteolytic degradation of most intracellular proteins. This complex plays numerous essential roles within the cell by associating with different regulatory particles. Associated with two 19S regulatory particles, forms the 26S proteasome and thus participates in the ATP-dependent degradation of ubiquitinated proteins. The 26S proteasome plays a key role in the maintenance of protein homeostasis by removing misfolded or damaged proteins that could impair cellular functions, and by removing proteins whose functions are no longer required. Associated with the PA200 or PA28, the 20S proteasome mediates ubiquitin-independent protein degradation. This type of proteolysis is required in several pathways including spermatogenesis (20S-PA200 complex) or generation of a subset of MHC class I-presented antigenic peptides (20S-PA28 complex). SMAD1/OAZ1/PSMB4 complex mediates the degradation of the CREBBP/EP300 repressor SNIP1. This is Proteasome subunit beta type-4 (PSMB4) from Bos taurus (Bovine).